A 128-amino-acid polypeptide reads, in one-letter code: Flagellar hook-basal body complex protein FliE (128 aa).

The segment at 1–60 (MRPVASFRPPPTFSALQGGASSQATKTAGIDQRGTNQAFSLLDPQSTQSNSTDSSFGEMG) is disordered. Polar residues predominate over residues 33–55 (RGTNQAFSLLDPQSTQSNSTDSS).

The protein belongs to the FliE family.

Its subcellular location is the bacterial flagellum basal body. The sequence is that of Flagellar hook-basal body complex protein FliE from Rhodopirellula baltica (strain DSM 10527 / NCIMB 13988 / SH1).